Consider the following 307-residue polypeptide: Elongation factor Ts (307 aa).

Residues Thr79–Val82 are involved in Mg(2+) ion dislocation from EF-Tu.

This sequence belongs to the EF-Ts family.

Its subcellular location is the cytoplasm. Associates with the EF-Tu.GDP complex and induces the exchange of GDP to GTP. It remains bound to the aminoacyl-tRNA.EF-Tu.GTP complex up to the GTP hydrolysis stage on the ribosome. The polypeptide is Elongation factor Ts (Sinorhizobium fredii (strain NBRC 101917 / NGR234)).